The chain runs to 255 residues: Epoxyqueuosine reductase QueH (255 aa).

The [4Fe-4S] cluster site is built by C44, C45, C128, and C131. C210 and C212 are disulfide-bonded.

The protein belongs to the QueH family.

It catalyses the reaction epoxyqueuosine(34) in tRNA + AH2 = queuosine(34) in tRNA + A + H2O. Its pathway is tRNA modification; tRNA-queuosine biosynthesis. Functionally, catalyzes the conversion of epoxyqueuosine (oQ) to queuosine (Q), which is a hypermodified base found in the wobble positions of tRNA(Asp), tRNA(Asn), tRNA(His) and tRNA(Tyr). The protein is Epoxyqueuosine reductase QueH of Streptococcus pyogenes serotype M1.